The sequence spans 239 residues: Uridylate kinase (239 aa).

10–13 contacts ATP; that stretch reads KISG. The involved in allosteric activation by GTP stretch occupies residues 18 to 23; it reads GEAGFG. Gly-52 contributes to the UMP binding site. ATP contacts are provided by Gly-53 and Arg-57. Residues Asp-72 and 133 to 140 contribute to the UMP site; that span reads TGNPYFST. Residues Asn-161, Tyr-167, and Asp-170 each contribute to the ATP site.

This sequence belongs to the UMP kinase family. In terms of assembly, homohexamer.

Its subcellular location is the cytoplasm. The enzyme catalyses UMP + ATP = UDP + ADP. It functions in the pathway pyrimidine metabolism; CTP biosynthesis via de novo pathway; UDP from UMP (UMPK route): step 1/1. Its activity is regulated as follows. Allosterically activated by GTP. Inhibited by UTP. Functionally, catalyzes the reversible phosphorylation of UMP to UDP. In Lacticaseibacillus paracasei (strain ATCC 334 / BCRC 17002 / CCUG 31169 / CIP 107868 / KCTC 3260 / NRRL B-441) (Lactobacillus paracasei), this protein is Uridylate kinase.